Reading from the N-terminus, the 471-residue chain is uncharacterized protein (471 aa).

11 helical membrane-spanning segments follow: residues 15-35 (LWGP…TILL), 66-86 (PLQA…IVGV), 89-109 (AIMF…LFAM), 147-167 (WLGV…IMVQ), 179-199 (FSFN…LVVI), 210-230 (EFVV…IVLM), 237-257 (AFFS…GGFA), 303-323 (VIGI…IVLA), 353-373 (GYFV…VVIF), 386-406 (LAGH…AAGG), and 410-430 (IWGV…IALL).

It belongs to the alanine or glycine:cation symporter (AGCS) (TC 2.A.25) family.

The protein localises to the cell membrane. This is an uncharacterized protein from Bacillus subtilis (strain 168).